A 209-amino-acid polypeptide reads, in one-letter code: Superoxide dismutase [Mn/Fe] (209 aa).

Residues His-38, His-90, Asp-172, and His-176 each contribute to the Fe(3+) site. Residues His-38, His-90, Asp-172, and His-176 each coordinate Mn(2+).

It belongs to the iron/manganese superoxide dismutase family. The cofactor is Mn(2+). It depends on Fe(3+) as a cofactor.

It carries out the reaction 2 superoxide + 2 H(+) = H2O2 + O2. Destroys superoxide anion radicals which are normally produced within the cells and which are toxic to biological systems. Catalyzes the dismutation of superoxide anion radicals into O2 and H2O2 by successive reduction and oxidation of the transition metal ion at the active site. This chain is Superoxide dismutase [Mn/Fe] (sodB), found in Rickettsia bellii (strain RML369-C).